Consider the following 207-residue polypeptide: Serotonin N-acetyltransferase (207 aa).

The tract at residues 1–29 is disordered; sequence MSTPSVHCLKPSPLHLPSGIPGSPGRQRR. Residues 28 to 35 are YWHAZ-binding; it reads RRHTLPAN. Thr31 carries the post-translational modification Phosphothreonine; by PKA. Residues 35 to 196 enclose the N-acetyltransferase domain; it reads NEFRCLTPED…TFTEMHCSLR (162 aa). Leu124 contacts substrate. Acetyl-CoA contacts are provided by residues 124–126 and 132–137; these read LAV and QQGKGS. Met159 lines the substrate pocket. 168-170 serves as a coordination point for acetyl-CoA; it reads YQR. Ser205 carries the post-translational modification Phosphoserine; by PKA.

Belongs to the acetyltransferase family. AANAT subfamily. In terms of assembly, monomer. Interacts with several 14-3-3 proteins, including YWHAB, YWHAE, YWHAG and YWHAZ, preferentially when phosphorylated at Thr-31. Phosphorylation on Ser-205 also allows binding to YWHAZ, but with a 10-fold lower affinity. The interaction with YWHAZ considerably increases affinity for arylalkylamines and acetyl-CoA and protects the enzyme from dephosphorylation and proteasomal degradation. It may also prevent thiol-dependent inactivation. The physiological stoichiometry of the interaction is not clear. In vitro studies show either 1:2 (i.e. 1 AANAT molecule per YWHAZ dimer) or 2:2. Post-translationally, cAMP-dependent phosphorylation on both N-terminal Thr-31 and C-terminal Ser-205 regulates AANAT activity by promoting interaction with 14-3-3 proteins. As to expression, highest expression in the pineal gland, followed by retina. Expressed at much lower levels in brainstem and pituitary gland. AANAT activity also detected at low levels in the olfactory lobe.

It is found in the cytoplasm. It carries out the reaction a 2-arylethylamine + acetyl-CoA = an N-acetyl-2-arylethylamine + CoA + H(+). Its pathway is aromatic compound metabolism; melatonin biosynthesis; melatonin from serotonin: step 1/2. Controls the night/day rhythm of melatonin production in the pineal gland. Catalyzes the N-acetylation of serotonin into N-acetylserotonin, the penultimate step in the synthesis of melatonin. This chain is Serotonin N-acetyltransferase (AANAT), found in Ovis aries (Sheep).